Consider the following 498-residue polypeptide: Glycerol kinase (498 aa).

ADP is bound at residue Thr12. Residues Thr12, Thr13, and Ser14 each coordinate ATP. Thr12 is a binding site for sn-glycerol 3-phosphate. Residue Arg16 coordinates ADP. The sn-glycerol 3-phosphate site is built by Arg82, Glu83, Tyr134, and Asp243. Positions 82, 83, 134, 243, and 244 each coordinate glycerol. Positions 265 and 308 each coordinate ADP. Positions 265, 308, 312, and 409 each coordinate ATP. 2 residues coordinate ADP: Gly409 and Asn413.

Belongs to the FGGY kinase family. Homotetramer and homodimer (in equilibrium).

It carries out the reaction glycerol + ATP = sn-glycerol 3-phosphate + ADP + H(+). It participates in polyol metabolism; glycerol degradation via glycerol kinase pathway; sn-glycerol 3-phosphate from glycerol: step 1/1. Activated by phosphorylation and inhibited by fructose 1,6-bisphosphate (FBP). Functionally, key enzyme in the regulation of glycerol uptake and metabolism. Catalyzes the phosphorylation of glycerol to yield sn-glycerol 3-phosphate. The protein is Glycerol kinase of Clostridium botulinum (strain Okra / Type B1).